Here is a 341-residue protein sequence, read N- to C-terminus: L-threonine 3-dehydrogenase (341 aa).

Position 38 (Cys38) interacts with Zn(2+). Residues Thr40 and His43 each act as charge relay system in the active site. 6 residues coordinate Zn(2+): His63, Glu64, Cys93, Cys96, Cys99, and Cys107. NAD(+)-binding positions include Ile175, Asp195, Arg200, Leu262–Ile264, and Ile286–Tyr287.

The protein belongs to the zinc-containing alcohol dehydrogenase family. Homotetramer. Zn(2+) is required as a cofactor.

The protein resides in the cytoplasm. It carries out the reaction L-threonine + NAD(+) = (2S)-2-amino-3-oxobutanoate + NADH + H(+). Its pathway is amino-acid degradation; L-threonine degradation via oxydo-reductase pathway; glycine from L-threonine: step 1/2. Catalyzes the NAD(+)-dependent oxidation of L-threonine to 2-amino-3-ketobutyrate. The chain is L-threonine 3-dehydrogenase from Shewanella pealeana (strain ATCC 700345 / ANG-SQ1).